Here is a 287-residue protein sequence, read N- to C-terminus: Pol-RFamide neuropeptides (287 aa).

The first 21 residues, 1–21 (MNLITLLVLGVSTCLIYGIEA), serve as a signal peptide directing secretion. Positions 22–52 (DEKTSSALENEIVEILNGNFKNEKKSIETSD) are excised as a propeptide. Residue glutamine 53 is modified to Pyrrolidone carboxylic acid. At phenylalanine 59 the chain carries Phenylalanine amide. Positions 62 to 64 (EVN) are excised as a propeptide. A Pyrrolidone carboxylic acid modification is found at glutamine 65. A Phenylalanine amide modification is found at phenylalanine 71. Positions 74-77 (ELSD) are excised as a propeptide. Position 78 is a pyrrolidone carboxylic acid (glutamine 78). A Phenylalanine amide modification is found at phenylalanine 84. The propeptide occupies 87–90 (ELSD). Glutamine 91 bears the Pyrrolidone carboxylic acid mark. The residue at position 97 (phenylalanine 97) is a Phenylalanine amide. The propeptide occupies 100 to 103 (EVLD). Residue glutamine 104 is modified to Pyrrolidone carboxylic acid. Phenylalanine 110 carries the phenylalanine amide modification. The propeptide occupies 113 to 116 (DASN). At glutamine 117 the chain carries Pyrrolidone carboxylic acid. Phenylalanine 123 is subject to Phenylalanine amide. Positions 126–129 (ELSD) are excised as a propeptide. Pyrrolidone carboxylic acid is present on glutamine 130. Position 136 is a phenylalanine amide (phenylalanine 136). A propeptide spanning residues 139–142 (EGSN) is cleaved from the precursor. Glutamine 143 carries the pyrrolidone carboxylic acid modification. Phenylalanine amide is present on phenylalanine 149. The propeptide occupies 152–168 (EASKNDLEKQNGRGDSD). Glutamine 169 bears the Pyrrolidone carboxylic acid mark. A Phenylalanine amide modification is found at phenylalanine 175. Positions 178 to 181 (EARK) are excised as a propeptide. Glutamine 182 is subject to Pyrrolidone carboxylic acid. A Phenylalanine amide modification is found at phenylalanine 188. Residues 192 to 194 (DMN) constitute a propeptide that is removed on maturation. Glutamine 195 is subject to Pyrrolidone carboxylic acid. At histidine 201 the chain carries Histidine amide. Residues 204–207 (ETSD) constitute a propeptide that is removed on maturation. The residue at position 208 (glutamine 208) is a Pyrrolidone carboxylic acid. Phenylalanine 214 carries the post-translational modification Phenylalanine amide. Residues 217 to 220 (QLSD) constitute a propeptide that is removed on maturation. At glutamine 221 the chain carries Pyrrolidone carboxylic acid. Phenylalanine amide is present on phenylalanine 227. Residues 229–267 (REVKNDKNNPFRSRYTGDSTQLQRENNQPIEELRDNTEK) are disordered. Residues 230-287 (EVKNDKNNPFRSRYTGDSTQLQRENNQPIEELRDNTEKVSIENKPIMKKTSVKISKTV) constitute a propeptide that is removed on maturation. The span at 238 to 257 (PFRSRYTGDSTQLQRENNQP) shows a compositional bias: polar residues.

It belongs to the FARP (FMRFamide related peptide) family. In terms of processing, the N-terminal processing sites of the Pol-RFamide peptides are acidic suggesting that cniderian nervous systems may use a variety of unconventional processing procedures.

The protein localises to the secreted. Its function is as follows. Has direct action on motoneurons, and effect includes transient inhibition followed by prolonged excitation. This chain is Pol-RFamide neuropeptides, found in Polyorchis penicillatus (Hydromedusa).